The sequence spans 117 residues: Histone-like protein Hq1 (117 aa).

2 stretches are compositionally biased toward basic residues: residues 1–17 and 39–50; these read MPAKKRKTTRQRRRSKA and RKLRAAQKKLAK. Residues 1 to 117 are disordered; it reads MPAKKRKTTR…RGRGRPRKKA (117 aa). A compositionally biased stretch (basic and acidic residues) spans 51–68; sequence AKKDASRKLAKLRKEAAR. Residues 71 to 117 show a composition bias toward basic residues; sequence AAAKKTRAPSKKGRKKATRKKGGGRSRKTARKVSTMKRGRGRPRKKA.

Binds DNA in vitro. The polypeptide is Histone-like protein Hq1 (hcbA) (Coxiella burnetii (strain RSA 493 / Nine Mile phase I)).